A 306-amino-acid polypeptide reads, in one-letter code: MNNEFINFDRISRENWKDLHQQSQALLTEKELESIKSLNDNINIQDVIDIYLPLINLIQIYKRSQENLSFSKAIFLKKENYQRPFIIGISGSVAVGKSTTSRLLQLLISRTFKDSHVELVTTDGFLYPNEKLIQNGILNRKGFPESYDMESLLNFLDTIKNGITAKIPIYSHEIYDIVPNQLQTIETPDFLILEGINVFQNQQNHRLYMNDYFDFSIYIDAENKQIEEWYLQRFNSLLQLAEADPSNYYHKFTQIPPHKAMELAKDIWKTINLVNLEKYIEPTRNRADFIIHKGKHHKIDEIYLKK.

91 to 98 (GSVAVGKS) lines the ATP pocket.

The protein belongs to the prokaryotic pantothenate kinase family.

Its subcellular location is the cytoplasm. The enzyme catalyses (R)-pantothenate + ATP = (R)-4'-phosphopantothenate + ADP + H(+). It participates in cofactor biosynthesis; coenzyme A biosynthesis; CoA from (R)-pantothenate: step 1/5. The sequence is that of Pantothenate kinase from Streptococcus agalactiae serotype Ia (strain ATCC 27591 / A909 / CDC SS700).